A 547-amino-acid chain; its full sequence is Chaperonin GroEL (547 aa).

Residues Thr30–Pro33, Lys51, Asp87–Thr91, Gly415, Asn479–Ala481, and Asp495 each bind ATP. Residues Pro525–Met547 are disordered. Residues Ala532–Met547 are compositionally biased toward gly residues.

Belongs to the chaperonin (HSP60) family. As to quaternary structure, forms a cylinder of 14 subunits composed of two heptameric rings stacked back-to-back. Interacts with the co-chaperonin GroES.

It localises to the cytoplasm. It carries out the reaction ATP + H2O + a folded polypeptide = ADP + phosphate + an unfolded polypeptide.. Functionally, together with its co-chaperonin GroES, plays an essential role in assisting protein folding. The GroEL-GroES system forms a nano-cage that allows encapsulation of the non-native substrate proteins and provides a physical environment optimized to promote and accelerate protein folding. The polypeptide is Chaperonin GroEL (Nitrosomonas europaea (strain ATCC 19718 / CIP 103999 / KCTC 2705 / NBRC 14298)).